Consider the following 272-residue polypeptide: Bis(5'-nucleosyl)-tetraphosphatase, symmetrical (272 aa).

This sequence belongs to the Ap4A hydrolase family.

It catalyses the reaction P(1),P(4)-bis(5'-adenosyl) tetraphosphate + H2O = 2 ADP + 2 H(+). In terms of biological role, hydrolyzes diadenosine 5',5'''-P1,P4-tetraphosphate to yield ADP. This chain is Bis(5'-nucleosyl)-tetraphosphatase, symmetrical, found in Chromohalobacter salexigens (strain ATCC BAA-138 / DSM 3043 / CIP 106854 / NCIMB 13768 / 1H11).